Consider the following 261-residue polypeptide: Segregation and condensation protein A (261 aa).

The protein belongs to the ScpA family. Component of a cohesin-like complex composed of ScpA, ScpB and the Smc homodimer, in which ScpA and ScpB bind to the head domain of Smc. The presence of the three proteins is required for the association of the complex with DNA.

Its subcellular location is the cytoplasm. Its function is as follows. Participates in chromosomal partition during cell division. May act via the formation of a condensin-like complex containing Smc and ScpB that pull DNA away from mid-cell into both cell halves. This Ligilactobacillus salivarius (strain UCC118) (Lactobacillus salivarius) protein is Segregation and condensation protein A.